The chain runs to 765 residues: Glucosamine inositolphosphorylceramide transferase 1 (765 aa).

Transmembrane regions (helical) follow at residues 43–63, 394–414, and 476–496; these read FFASCFGFYAFVAATYAWFVF, VILGYASLAAAISVVILLGFL, and MGKFTLGVIVILGLLLTCVGV. Residues N553, 577-582, 598-600, R628, and 683-687 contribute to the substrate site; these read NSLNNR, DDD, and FNCED. D600 lines the Mn(2+) pocket. A disulfide bridge connects residues C685 and C738. D687 is an active-site residue.

It belongs to the glycosyltransferase 64 family. The cofactor is Mn(2+). Specifically and highly expressed in developing embryos and mature seeds. Also detected at low levels in stigma and pollen.

Its subcellular location is the membrane. It catalyses the reaction an N-(2R-hydroxy-very-long-chain fatty acyl)-(R)-4-hydroxysphingoid base + a 1,2-diacyl-sn-glycero-3-phospho-(1D-myo-inositol) = a 1D-myo-inositol-1-phospho-N-[(R)-2-hydroxy-very-long-chain fatty acyl]-(R)-4-hydroxysphingoid base + a 1,2-diacyl-sn-glycerol. It functions in the pathway sphingolipid metabolism. Functionally, glycosyltransferase that mediates the glycosylation of glycosylinositol phosphorylceramides (GIPCs), the major sphingolipids in the plasma membrane; acts as a HexN(Ac)-specific GIPC sugar transferase and accepts glucosamine (GlcN) and N-acetylglucosamine (GlcNAc) as the sugar unit. Responsible for the glycosylation of a subgroup of GIPCs found in seeds and pollen that contain GlcNAc and GlcN (GlcN(Ac)). Maybe involved in the maintenance of cell-cell adhesion. The chain is Glucosamine inositolphosphorylceramide transferase 1 from Arabidopsis thaliana (Mouse-ear cress).